The chain runs to 485 residues: MTHWIAGDWVSGHGETIQSLSPYNSNVVWQGESATKDQVESAVSAARHAFIEWKKQPFEARQVIIERFAALVKENTDKIAEVISKETGKPFWETKTEAGAMVGKIAISIRAYHERTPHKEREAAGNKIVLRHRPLGVMAVFGPYNFPGHLPNGHIVPALLAGNTVVLKPSEQTPWTSEVIMKLWQQAGLPNGVINLVQGARETGEALASAKGIDGLLFTGSANTGHILHRQFSGDTGKMLALEMGGNNPMVISKSFGEQEAAVYTIIQSAFISAGQRCTCARRLYVPIGKAGDELLVRLVEVAKTIVVDQPFAENTPFMGPQISIAAAEFILNAQKNLQDLGGESLLEAKSLGHAFVSPGIIDATNVAELPDEEYFGPLLQVVRYETLEEAVELANDTRYGLSAGLVSTDDSEWEYFVEHIRAGIVNRNRQLTGASGDAPFGGPGASGNMKPSAYYAADYCAYPMASMEGDACEIPAQLSPGLTL.

Residue 220 to 225 (GSANTG) participates in NAD(+) binding. Active-site residues include Glu-243 and Cys-278.

The protein belongs to the aldehyde dehydrogenase family. AstD subfamily.

The catalysed reaction is N-succinyl-L-glutamate 5-semialdehyde + NAD(+) + H2O = N-succinyl-L-glutamate + NADH + 2 H(+). Its pathway is amino-acid degradation; L-arginine degradation via AST pathway; L-glutamate and succinate from L-arginine: step 4/5. Functionally, catalyzes the NAD-dependent reduction of succinylglutamate semialdehyde into succinylglutamate. In Aliivibrio salmonicida (strain LFI1238) (Vibrio salmonicida (strain LFI1238)), this protein is N-succinylglutamate 5-semialdehyde dehydrogenase.